The chain runs to 212 residues: Imidazole glycerol phosphate synthase subunit HisH (212 aa).

In terms of domain architecture, Glutamine amidotransferase type-1 spans 3–212 (DIAIVDYGMG…LGNFVRWKPV (210 aa)). C82 acts as the Nucleophile in catalysis. Residues H191 and E193 contribute to the active site.

As to quaternary structure, heterodimer of HisH and HisF.

The protein resides in the cytoplasm. The enzyme catalyses 5-[(5-phospho-1-deoxy-D-ribulos-1-ylimino)methylamino]-1-(5-phospho-beta-D-ribosyl)imidazole-4-carboxamide + L-glutamine = D-erythro-1-(imidazol-4-yl)glycerol 3-phosphate + 5-amino-1-(5-phospho-beta-D-ribosyl)imidazole-4-carboxamide + L-glutamate + H(+). It catalyses the reaction L-glutamine + H2O = L-glutamate + NH4(+). The protein operates within amino-acid biosynthesis; L-histidine biosynthesis; L-histidine from 5-phospho-alpha-D-ribose 1-diphosphate: step 5/9. Functionally, IGPS catalyzes the conversion of PRFAR and glutamine to IGP, AICAR and glutamate. The HisH subunit catalyzes the hydrolysis of glutamine to glutamate and ammonia as part of the synthesis of IGP and AICAR. The resulting ammonia molecule is channeled to the active site of HisF. The protein is Imidazole glycerol phosphate synthase subunit HisH of Nitrosospira multiformis (strain ATCC 25196 / NCIMB 11849 / C 71).